The sequence spans 317 residues: WSCD family member AAEL009094 (317 aa).

The chain crosses the membrane as a helical span at residues 8-28 (LFGLAGTILVYIGGILFLSFV). Residues Asn150, Asn226, and Asn232 are each glycosylated (N-linked (GlcNAc...) asparagine).

It belongs to the WSCD family.

It is found in the membrane. The protein is WSCD family member AAEL009094 of Aedes aegypti (Yellowfever mosquito).